The chain runs to 502 residues: Facilitated trehalose transporter Tret1 (502 aa).

The Cytoplasmic portion of the chain corresponds to 1-38; that stretch reads MGVENTKQTMSSQNIKPAKDSDDVLHTQFKEVKRSPMR. Residues 39–59 traverse the membrane as a helical segment; the sequence is YTMQLLAALAVSMASLMIGYS. Residues 60–83 are Extracellular-facing; it reads SSYTSPALVSMRDNTTATFEVTMD. N-linked (GlcNAc...) asparagine glycosylation is present at N73. A helical membrane pass occupies residues 84–104; that stretch reads MAMWIGSIMPLSALIGGIIGG. The Cytoplasmic segment spans residues 105 to 120; the sequence is PCIEYIGRRNTILSTA. A helical transmembrane segment spans residues 121 to 141; the sequence is LPFLAGWLFIALATNVAMILV. Residues 142–144 are Extracellular-facing; sequence GRS. The chain crosses the membrane as a helical span at residues 145 to 165; sequence ICGFCVGVASLSLPVYLGESI. Topologically, residues 166–172 are cytoplasmic; it reads QPEVRGS. The helical transmembrane segment at 173-193 threads the bilayer; the sequence is LGLLPTVFGNSGILMCFTAGM. At 194 to 199 the chain is on the extracellular side; the sequence is YLAWRN. Residues 200-220 form a helical membrane-spanning segment; that stretch reads LALLGACIPIIFLILMFLIPE. The Cytoplasmic segment spans residues 221–282; it reads TPRWYISKGK…ELFRKNHIKP (62 aa). A helical membrane pass occupies residues 283-303; sequence VFISLGLMFFQQFSGINAVIF. Over 304-319 the chain is Extracellular; sequence YTVQIFKDSGSTVDEN. An N-linked (GlcNAc...) asparagine glycan is attached at N319. Residues 320-340 traverse the membrane as a helical segment; that stretch reads LSTIIVGLVNFISTFVAAMII. The Cytoplasmic segment spans residues 341–346; the sequence is DRLGRK. The helical transmembrane segment at 347 to 367 threads the bilayer; it reads MLLYISSILMCITLFTFGTFF. Topologically, residues 368 to 376 are extracellular; sequence YVKELMDVT. A helical transmembrane segment spans residues 377–397; sequence AFGWIPLMSLIVYVIGFSFGF. The Cytoplasmic portion of the chain corresponds to 398 to 410; the sequence is GPIPWLMMGEILP. A helical transmembrane segment spans residues 411-433; that stretch reads VKIRGTAASVATAFNWSCTFVVT. The Extracellular portion of the chain corresponds to 434 to 446; the sequence is KTYEDLVLHIGPY. The helical transmembrane segment at 447-467 threads the bilayer; that stretch reads GTFWLFGTLVAVAFIFVIICV. Residues 468–502 are Cytoplasmic-facing; it reads PETRGRSLEEIERRFAGPVRRTSAIANLKPMPITI.

The protein belongs to the major facilitator superfamily. Sugar transporter (TC 2.A.1.1) family. Trehalose transporter subfamily.

The protein localises to the cell membrane. In terms of biological role, moderate-capacity facilitative transporter for trehalose. Does not transport maltose, sucrose or lactose. Mediates the bidirectional transfer of trehalose. Responsible for the transport of trehalose synthesized in the fat body and the incorporation of trehalose into other tissues that require a carbon source, thereby regulating trehalose levels in the hemolymph. The polypeptide is Facilitated trehalose transporter Tret1 (Apis mellifera ligustica (Common honeybee)).